A 409-amino-acid polypeptide reads, in one-letter code: MGPEKFARAKPHINIGTIGHVDHGKTTFTAAITATLANDGESFAKAYSDIDGAPEERARGITINTAHVEYQTRDRHYAHVDCPGHADYVKNMITGAAQMDGAILVVSAADGPMPQTREHILLAKQVGVPHIVVFLNKQDQVDDDELLELVELEVRELLSTYDFPGDDIPICPGSRLQAIEAISSNPTLKRGDNPWVDKIYALMDAVDAYIPTPERDVEKTFLMAIEDVFSITGRGTVATGRIERGVIKVVDNVEIVGIGDTKTTTITGIEMFQKTLEEGFAGDNVGILLRGVTRENIERGMVLAKPGTITPHTNFESEVYVLTKEEGGRHTPFFTGYSPIFYVITTDVTGSIDQFTADDGSIVEMVMPGDRIKMTAELIYPVAIEEGMRFVIREGGRTIGAGVVSKIVK.

The region spanning 10–214 (KPHINIGTIG…AVDAYIPTPE (205 aa)) is the tr-type G domain. Residues 19-26 (GHVDHGKT) form a G1 region. 19–26 (GHVDHGKT) contacts GTP. Mg(2+) is bound at residue T26. Positions 60 to 64 (GITIN) are G2. A G3 region spans residues 81–84 (DCPG). GTP contacts are provided by residues 81-85 (DCPGH) and 136-139 (NKQD). The segment at 136 to 139 (NKQD) is G4. Residues 174–176 (SRL) are G5.

The protein belongs to the TRAFAC class translation factor GTPase superfamily. Classic translation factor GTPase family. EF-Tu/EF-1A subfamily.

The protein localises to the plastid. It localises to the chloroplast. The enzyme catalyses GTP + H2O = GDP + phosphate + H(+). Its function is as follows. GTP hydrolase that promotes the GTP-dependent binding of aminoacyl-tRNA to the A-site of ribosomes during protein biosynthesis. The polypeptide is Elongation factor Tu, chloroplastic (tufA) (Stephanocyclus meneghinianus (Diatom)).